The primary structure comprises 462 residues: Argininosuccinate lyase (462 aa).

This sequence belongs to the lyase 1 family. Argininosuccinate lyase subfamily.

Its subcellular location is the cytoplasm. It carries out the reaction 2-(N(omega)-L-arginino)succinate = fumarate + L-arginine. The protein operates within amino-acid biosynthesis; L-arginine biosynthesis; L-arginine from L-ornithine and carbamoyl phosphate: step 3/3. The sequence is that of Argininosuccinate lyase from Bacillus cereus (strain ATCC 10987 / NRS 248).